Consider the following 867-residue polypeptide: Alanine--tRNA ligase (867 aa).

Residues H558, H562, C660, and H664 each contribute to the Zn(2+) site.

Belongs to the class-II aminoacyl-tRNA synthetase family. Zn(2+) is required as a cofactor.

It localises to the cytoplasm. The catalysed reaction is tRNA(Ala) + L-alanine + ATP = L-alanyl-tRNA(Ala) + AMP + diphosphate. Catalyzes the attachment of alanine to tRNA(Ala) in a two-step reaction: alanine is first activated by ATP to form Ala-AMP and then transferred to the acceptor end of tRNA(Ala). Also edits incorrectly charged Ser-tRNA(Ala) and Gly-tRNA(Ala) via its editing domain. The chain is Alanine--tRNA ligase from Fervidobacterium nodosum (strain ATCC 35602 / DSM 5306 / Rt17-B1).